The sequence spans 189 residues: Mediator of RNA polymerase II transcription subunit 21 (189 aa).

The segment at 50–102 (KIPKNSTAPPVPAGAPVPSQSSPPPPQTQRGASEAAADPNLPPAPDSPRTFAS) is disordered. Positions 58-76 (PPVPAGAPVPSQSSPPPPQ) are enriched in pro residues. The stretch at 127–170 (GIDSSEAEQEKRIRELEAELRGVEEEREAKIRELRTLGRTLERV) forms a coiled coil.

It belongs to the Mediator complex subunit 21 family. Component of the Mediator complex.

It localises to the nucleus. Component of the Mediator complex, a coactivator involved in the regulated transcription of nearly all RNA polymerase II-dependent genes. Mediator functions as a bridge to convey information from gene-specific regulatory proteins to the basal RNA polymerase II transcription machinery. Mediator is recruited to promoters by direct interactions with regulatory proteins and serves as a scaffold for the assembly of a functional preinitiation complex with RNA polymerase II and the general transcription factors. This chain is Mediator of RNA polymerase II transcription subunit 21 (srb7), found in Aspergillus clavatus (strain ATCC 1007 / CBS 513.65 / DSM 816 / NCTC 3887 / NRRL 1 / QM 1276 / 107).